The chain runs to 430 residues: Tol-Pal system protein TolB (430 aa).

Positions 1-21 are cleaved as a signal peptide; the sequence is MKQALRVAFGFLILWASVLHA.

It belongs to the TolB family. In terms of assembly, the Tol-Pal system is composed of five core proteins: the inner membrane proteins TolA, TolQ and TolR, the periplasmic protein TolB and the outer membrane protein Pal. They form a network linking the inner and outer membranes and the peptidoglycan layer.

The protein localises to the periplasm. Its function is as follows. Part of the Tol-Pal system, which plays a role in outer membrane invagination during cell division and is important for maintaining outer membrane integrity. TolB occupies a key intermediary position in the Tol-Pal system because it communicates directly with both membrane-embedded components, Pal in the outer membrane and TolA in the inner membrane. The polypeptide is Tol-Pal system protein TolB (Shigella flexneri serotype 5b (strain 8401)).